The chain runs to 430 residues: Adenylosuccinate synthetase (430 aa).

GTP contacts are provided by residues 12 to 18 (GDEGKGK) and 40 to 42 (GHT). Residue aspartate 13 is the Proton acceptor of the active site. Aspartate 13 and glycine 40 together coordinate Mg(2+). IMP contacts are provided by residues 13-16 (DEGK), 38-41 (NAGH), threonine 129, arginine 143, glutamine 224, threonine 239, and arginine 303. Catalysis depends on histidine 41, which acts as the Proton donor. 299–305 (TVSNRER) serves as a coordination point for substrate. Residues arginine 305, 331 to 333 (KLD), and 413 to 415 (STG) contribute to the GTP site.

The protein belongs to the adenylosuccinate synthetase family. Homodimer. Mg(2+) is required as a cofactor.

The protein localises to the cytoplasm. The catalysed reaction is IMP + L-aspartate + GTP = N(6)-(1,2-dicarboxyethyl)-AMP + GDP + phosphate + 2 H(+). It participates in purine metabolism; AMP biosynthesis via de novo pathway; AMP from IMP: step 1/2. Plays an important role in the de novo pathway of purine nucleotide biosynthesis. Catalyzes the first committed step in the biosynthesis of AMP from IMP. The chain is Adenylosuccinate synthetase from Ehrlichia ruminantium (strain Gardel).